A 109-amino-acid chain; its full sequence is Nucleoid-associated protein Cvib_1034 (109 aa).

The protein belongs to the YbaB/EbfC family. Homodimer.

It localises to the cytoplasm. The protein localises to the nucleoid. In terms of biological role, binds to DNA and alters its conformation. May be involved in regulation of gene expression, nucleoid organization and DNA protection. The polypeptide is Nucleoid-associated protein Cvib_1034 (Chlorobium phaeovibrioides (strain DSM 265 / 1930) (Prosthecochloris vibrioformis (strain DSM 265))).